The chain runs to 589 residues: Probable translation initiation factor IF-2 (589 aa).

Residues 14-231 (LRQPIVCVLG…GLAQRFLESE (218 aa)) form the tr-type G domain. The tract at residues 23–30 (GHVDHGKT) is G1. 23 to 30 (GHVDHGKT) lines the GTP pocket. A G2 region spans residues 48–52 (GITQR). Residues 84-87 (DTPG) are G3. Residues 84 to 88 (DTPGH) and 138 to 141 (NKID) contribute to the GTP site. Positions 138 to 141 (NKID) are G4. Residues 206-208 (SAK) form a G5 region.

This sequence belongs to the TRAFAC class translation factor GTPase superfamily. Classic translation factor GTPase family. IF-2 subfamily.

Its function is as follows. Function in general translation initiation by promoting the binding of the formylmethionine-tRNA to ribosomes. Seems to function along with eIF-2. In Thermoplasma volcanium (strain ATCC 51530 / DSM 4299 / JCM 9571 / NBRC 15438 / GSS1), this protein is Probable translation initiation factor IF-2.